Reading from the N-terminus, the 108-residue chain is ATP synthase subunit H, mitochondrial (108 aa).

Residues 1–19 (MFTLRAASRRAFSTSIARR) constitute a mitochondrion transit peptide. 2 disordered regions span residues 40-60 (AKDA…KPPV) and 75-108 (APVD…GVAV). A compositionally biased stretch (low complexity) spans 47–60 (VKPWSAPSAPKPPV). Positions 81–92 (GQTNSKSASPQA) are enriched in polar residues. Residues 93–108 (NDEDWLAFEEEEGVAV) show a composition bias toward acidic residues.

In terms of assembly, F-type ATP synthases have 2 components, the catalytic core F(1) and the membrane-embedded component F(0), linked together by a central stalk and a peripheral stalk. The central stalk, also called rotor shaft, is often seen as part of F(1). The peripheral stalk is seen as part of F(0). F(0) contains the membrane channel next to the rotor. F-type ATP synthases form dimers but each monomer functions independently in ATP generation. The dimer consists of 17 different polypeptides: ATP1 (subunit alpha, 3 molecules per monomer, part of F(1)), ATP2 (subunit beta, 3 copies per monomer, part of F(1)), ATP3 (subunit gamma, part of the central stalk), ATP4 (subunit b, part of the peripheral stalk), ATP5/OSCP (subunit 5/OSCP, part of the peripheral stalk), ATP6 (subunit a, part of the peripheral stalk), ATP7 (subunit d, part of the peripheral stalk), ATP8 (subunit 8, part of the peripheral stalk), OLI1 (subunit c, part of the rotor, 10 molecules per monomer), ATP14 (subunit H, part of the peripheral stalk), ATP15 (subunit epsilon, part of the central stalk), ATP16 (subunit delta, part of the central stalk), ATP17 (subunit f, part of the peripheral stalk), ATP18 (subunit i/j, part of the peripheral stalk), ATP19 (subunit k, dimer-specific, at interface between monomers), ATP20 (subunit g, at interface between monomers), TIM11 (subunit e, at interface between monomers).

It localises to the mitochondrion inner membrane. In terms of biological role, mitochondrial membrane ATP synthase (F(1)F(0) ATP synthase or Complex V) produces ATP from ADP in the presence of a proton gradient across the membrane which is generated by electron transport complexes of the respiratory chain. F-type ATP synthases consist of two structural domains, F(1) - containing the extramembraneous catalytic core, and F(0) - containing the membrane proton channel, linked together by a central stalk and a peripheral stalk. During catalysis, ATP synthesis in the catalytic domain of F(1) is coupled via a rotary mechanism of the central stalk subunits to proton translocation. Part of the peripheral stalk. This Yarrowia lipolytica (strain CLIB 122 / E 150) (Yeast) protein is ATP synthase subunit H, mitochondrial.